An 89-amino-acid polypeptide reads, in one-letter code: MMKEIELHLVDAAAPSGEIAIKDLAALATALQELTTRISRDPINTPGPGRTKQFMEELSQLASAPGPDIDGGIDLTDDEFQAFLQAARS.

This is an uncharacterized protein from Mycobacterium bovis (strain ATCC BAA-935 / AF2122/97).